The primary structure comprises 473 residues: UDP-glycosyltransferase 71A27 (473 aa).

Residue His15 is the Proton acceptor of the active site. His15 provides a ligand contact to an anthocyanidin. Asp117 serves as the catalytic Charge relay. 7 residues coordinate UDP-alpha-D-glucose: Ala345, Gln347, His362, Trp365, Asn366, Ser367, and Glu370. Gly385 is a binding site for an anthocyanidin. UDP-alpha-D-glucose contacts are provided by Glu386 and Gln387.

This sequence belongs to the UDP-glycosyltransferase family.

The catalysed reaction is (20S)-protopanaxadiol + UDP-alpha-D-glucose = (20S)-ginsenoside C-K + UDP + H(+). It participates in secondary metabolite biosynthesis; terpenoid biosynthesis. Functionally, component of the triterpene saponins (e.g. PPD-type ginsenosides or panaxosides) biosynthetic pathways. Glycosyltransferase that catalyzes the biosynthesis of compound K from protopanaxadiol (PPD). This Panax ginseng (Korean ginseng) protein is UDP-glycosyltransferase 71A27.